Consider the following 99-residue polypeptide: MSRGGSFGGGQSSLGYLFGSDNEIPKTPAPPVAPKPAPPYGVDSTEEDHEADQKPKISNNNYQRVQGQNSGNFVTDRPTTKVKSVPGGGSSLGYLFGDK.

The span at 1–12 (MSRGGSFGGGQS) shows a compositional bias: gly residues. Positions 1–99 (MSRGGSFGGG…SSLGYLFGDK (99 aa)) are disordered. The span at 27–39 (TPAPPVAPKPAPP) shows a compositional bias: pro residues. The span at 56–73 (KISNNNYQRVQGQNSGNF) shows a compositional bias: polar residues. Ser-58 bears the Phosphoserine mark.

It belongs to the SPIRAL1 family. Expressed exclusively in stems and flowers.

In terms of biological role, acts redundantly with SPR1 in maintaining the cortical microtubules organization essential for anisotropic cell growth. This chain is Protein SPIRAL1-like 5 (SP1L5), found in Arabidopsis thaliana (Mouse-ear cress).